A 282-amino-acid chain; its full sequence is Probable endonuclease 4 (282 aa).

Zn(2+) contacts are provided by His69, His109, Glu144, Asp178, His181, His215, Asp228, His230, and Glu260.

This sequence belongs to the AP endonuclease 2 family. Zn(2+) serves as cofactor.

It catalyses the reaction Endonucleolytic cleavage to 5'-phosphooligonucleotide end-products.. Endonuclease IV plays a role in DNA repair. It cleaves phosphodiester bonds at apurinic or apyrimidinic (AP) sites, generating a 3'-hydroxyl group and a 5'-terminal sugar phosphate. This is Probable endonuclease 4 from Thermosipho africanus (strain TCF52B).